A 996-amino-acid chain; its full sequence is Leucine-rich repeat receptor-like kinase protein THICK TASSEL DWARF1 (996 aa).

The N-terminal stretch at 1-26 (MPPPTFLLGLLLLLLLAAAAPAPASA) is a signal peptide. LRR repeat units follow at residues 78 to 103 (TSRV…VALL), 104 to 127 (DALA…LASM), 128 to 151 (PALR…PPAA), 153 to 178 (FPAL…APHA), 180 to 201 (SLRY…TFGD), 202 to 226 (LAAL…LSRL), 251 to 275 (LQSL…LARL), 276 to 299 (SRLD…LGAL), 300 to 323 (TSLR…FAAL), 325 to 349 (NLKL…DFPF), 351 to 371 (EVLQ…LGRN), 372 to 395 (GRLK…LCAG), 397 to 419 (NLQL…LGDC), 420 to 443 (KTLT…LFDL), 445 to 466 (QANM…VIAG), 467 to 490 (DKIG…IGNL), 491 to 514 (PALQ…IGRL), 516 to 538 (NLTR…LMGC), 539 to 562 (ASLG…VTSL), 563 to 586 (KILC…MANM), and 587 to 611 (TSLT…QFLV). A helical membrane pass occupies residues 646–666 (KKLLVWLVVLLTLLVLAVLGA). The Protein kinase domain occupies 703–978 (LKEDNIIGKG…TMREVVHMLS (276 aa)). Residues 709 to 717 (IGKGGAGIV) and lysine 731 contribute to the ATP site. Residue aspartate 828 is the Proton acceptor of the active site.

Belongs to the protein kinase superfamily. Ser/Thr protein kinase family. In terms of tissue distribution, highly expressed in the apex of the vegetative seedlings. Lower expression in young leaves, ears and tassels, embryos and roots. Not expressed in the shoot meristem itself. Detected in the three outermost layers of the inflorescence meristem, and on its flanks at positions of prospective spikelet pair meristems. Not confined to meristematic cells but also detected in primordia of glumes, lemmas and stamens.

It is found in the membrane. The catalysed reaction is L-seryl-[protein] + ATP = O-phospho-L-seryl-[protein] + ADP + H(+). It catalyses the reaction L-threonyl-[protein] + ATP = O-phospho-L-threonyl-[protein] + ADP + H(+). Its function is as follows. Receptor-like kinase protein that regulates meristem size during inflorescence and flower development. Promotes vegetative meristem growth and restricts inflorescence and floral meristem growth. Based on additive and synergistic phenotypes of double mutants, it is probable that unlike CLV1 and CLV2 in A.thaliana, TD1 and FAE2 do not function exclusively in a single pathway. However, KN-1 and TD1 do function in a linear pathway to maintain vegetative meristem homeostasis, but they may interact with different partners during development. The sequence is that of Leucine-rich repeat receptor-like kinase protein THICK TASSEL DWARF1 (TD1) from Zea mays (Maize).